The primary structure comprises 212 residues: Thylakoid membrane protein slr1949 (212 aa).

Residues 109 to 131 form a helical membrane-spanning segment; that stretch reads WVQDGLLLLLALGLCGISGYRLW. Residues 180-212 are a coiled coil; sequence PNRRQRKQYETRLQALRQSAAKMKAKTQKAKAL.

The protein resides in the cellular thylakoid membrane. This Synechocystis sp. (strain ATCC 27184 / PCC 6803 / Kazusa) protein is Thylakoid membrane protein slr1949.